The primary structure comprises 690 residues: Serotransferrin-1 (690 aa).

The first 18 residues, 1–18 (MKLLLLSALLGCLATAYA), serve as a signal peptide directing secretion. Transferrin-like domains lie at 25-329 (VKWC…SLKK) and 340-669 (IKWC…SLRK). Cys28 and Cys50 are oxidised to a cystine. 2 residues coordinate Fe(3+): Asp74 and Tyr104. Cystine bridges form between Cys127–Cys207, Cys172–Cys186, and Cys235–Cys249. Hydrogencarbonate is bound by residues Thr129, Ser134, Gly136, and Trp137. Residue Asn169 is glycosylated (N-linked (GlcNAc...) asparagine). Tyr201 contacts Fe(3+). His257 contributes to the Fe(3+) binding site. 2 disulfides stabilise this stretch: Cys343-Cys379 and Cys353-Cys370. Fe(3+) contacts are provided by Asp394 and Tyr428. 7 disulfide bridges follow: Cys404–Cys681, Cys419–Cys642, Cys451–Cys529, Cys475–Cys670, Cys485–Cys499, Cys496–Cys512, and Cys569–Cys583. Residues Thr453, Arg457, Ala459, and Gly460 each contribute to the hydrogencarbonate site. A Fe(3+)-binding site is contributed by Tyr523. His591 is a Fe(3+) binding site.

The protein belongs to the transferrin family. As to quaternary structure, monomer. Abundant in liver and serum with smaller amounts found in the stomach and kidney.

It localises to the secreted. Its function is as follows. Transferrins are iron binding transport proteins which can bind two Fe(3+) ions in association with the binding of an anion, usually bicarbonate. It is responsible for the transport of iron from sites of absorption and heme degradation to those of storage and utilization. Serum transferrin may also have a further role in stimulating cell proliferation. The chain is Serotransferrin-1 (tf1) from Salmo salar (Atlantic salmon).